Consider the following 156-residue polypeptide: Cyclic pyranopterin monophosphate synthase (156 aa).

Residues 75–77 (LCH) and 111–112 (ME) each bind substrate. Aspartate 126 is an active-site residue.

The protein belongs to the MoaC family. As to quaternary structure, homohexamer; trimer of dimers.

It catalyses the reaction (8S)-3',8-cyclo-7,8-dihydroguanosine 5'-triphosphate = cyclic pyranopterin phosphate + diphosphate. Its pathway is cofactor biosynthesis; molybdopterin biosynthesis. In terms of biological role, catalyzes the conversion of (8S)-3',8-cyclo-7,8-dihydroguanosine 5'-triphosphate to cyclic pyranopterin monophosphate (cPMP). The polypeptide is Cyclic pyranopterin monophosphate synthase (Erythrobacter litoralis (strain HTCC2594)).